The sequence spans 951 residues: Translation initiation factor IF-2 (951 aa).

2 disordered regions span residues 58-255 (AERK…AVVI) and 305-329 (DVSR…KSLS). The segment covering 101–170 (AEPQYAEPQQ…PQAQPAQPAA (70 aa)) has biased composition (low complexity). The segment covering 171–216 (PVAPPAPSAQPSAPQPPAAQPRPPQPPMPSRPPPAGYRPAPPPGAR) has biased composition (pro residues). The span at 217–234 (PPMSAAPGAPAQPGAAGQ) shows a compositional bias: low complexity. A tr-type G domain is found at 450–619 (IRPPVVTVMG…ALQSEVLELK (170 aa)). The G1 stretch occupies residues 459-466 (GHVDHGKT). 459–466 (GHVDHGKT) is a GTP binding site. The interval 484–488 (GITQH) is G2. Residues 505–508 (DTPG) form a G3 region. GTP contacts are provided by residues 505 to 509 (DTPGH) and 559 to 562 (NKVD). Residues 559–562 (NKVD) are G4. The segment at 595–597 (SAR) is G5.

It belongs to the TRAFAC class translation factor GTPase superfamily. Classic translation factor GTPase family. IF-2 subfamily.

Its subcellular location is the cytoplasm. One of the essential components for the initiation of protein synthesis. Protects formylmethionyl-tRNA from spontaneous hydrolysis and promotes its binding to the 30S ribosomal subunits. Also involved in the hydrolysis of GTP during the formation of the 70S ribosomal complex. The polypeptide is Translation initiation factor IF-2 (Anaeromyxobacter dehalogenans (strain 2CP-1 / ATCC BAA-258)).